The chain runs to 203 residues: Probable GTP-binding protein EngB (203 aa).

Positions 24 to 199 (DGSEVAFAGR…HTVIETWLGL (176 aa)) constitute an EngB-type G domain. GTP is bound by residues 32 to 39 (GRSNAGKS), 59 to 63 (GRTQQ), 77 to 80 (DLPG), 144 to 147 (TKAD), and 178 to 180 (FSS). Residues serine 39 and threonine 61 each contribute to the Mg(2+) site.

This sequence belongs to the TRAFAC class TrmE-Era-EngA-EngB-Septin-like GTPase superfamily. EngB GTPase family. Requires Mg(2+) as cofactor.

Its function is as follows. Necessary for normal cell division and for the maintenance of normal septation. The chain is Probable GTP-binding protein EngB from Xylella fastidiosa (strain 9a5c).